A 344-amino-acid polypeptide reads, in one-letter code: Putative replication factor C small subunit L499 (344 aa).

Position 57 to 64 (57 to 64 (GPSGSGKT)) interacts with ATP.

The protein belongs to the activator 1 small subunits family. RfcS subfamily.

In terms of biological role, part of the RFC clamp loader complex which loads the PCNA sliding clamp onto DNA. This is Putative replication factor C small subunit L499 from Acanthamoeba polyphaga mimivirus (APMV).